A 414-amino-acid polypeptide reads, in one-letter code: Imidazolonepropionase (414 aa).

The Fe(3+) site is built by His77 and His79. Zn(2+) contacts are provided by His77 and His79. 4-imidazolone-5-propanoate-binding residues include Arg86, Tyr149, and His184. Tyr149 provides a ligand contact to N-formimidoyl-L-glutamate. His249 serves as a coordination point for Fe(3+). Zn(2+) is bound at residue His249. Glu252 provides a ligand contact to 4-imidazolone-5-propanoate. Asp323 provides a ligand contact to Fe(3+). Asp323 provides a ligand contact to Zn(2+). Residues Asn325 and Gly327 each contribute to the N-formimidoyl-L-glutamate site. Ser328 serves as a coordination point for 4-imidazolone-5-propanoate.

The protein belongs to the metallo-dependent hydrolases superfamily. HutI family. Zn(2+) is required as a cofactor. Requires Fe(3+) as cofactor.

It is found in the cytoplasm. It catalyses the reaction 4-imidazolone-5-propanoate + H2O = N-formimidoyl-L-glutamate. It functions in the pathway amino-acid degradation; L-histidine degradation into L-glutamate; N-formimidoyl-L-glutamate from L-histidine: step 3/3. In terms of biological role, catalyzes the hydrolytic cleavage of the carbon-nitrogen bond in imidazolone-5-propanoate to yield N-formimidoyl-L-glutamate. It is the third step in the universal histidine degradation pathway. This is Imidazolonepropionase from Phocaeicola vulgatus (strain ATCC 8482 / DSM 1447 / JCM 5826 / CCUG 4940 / NBRC 14291 / NCTC 11154) (Bacteroides vulgatus).